We begin with the raw amino-acid sequence, 208 residues long: Thiamine-phosphate synthase (208 aa).

4-amino-2-methyl-5-(diphosphooxymethyl)pyrimidine-binding positions include 37-41 (QYREK) and Asn73. Mg(2+) contacts are provided by Asp74 and Asp93. Ser112 provides a ligand contact to 4-amino-2-methyl-5-(diphosphooxymethyl)pyrimidine. 139–141 (TIS) contributes to the 2-[(2R,5Z)-2-carboxy-4-methylthiazol-5(2H)-ylidene]ethyl phosphate binding site. Residue Lys142 coordinates 4-amino-2-methyl-5-(diphosphooxymethyl)pyrimidine. 2-[(2R,5Z)-2-carboxy-4-methylthiazol-5(2H)-ylidene]ethyl phosphate is bound by residues Gly171 and 191–192 (IS).

Belongs to the thiamine-phosphate synthase family. Mg(2+) serves as cofactor.

The enzyme catalyses 2-[(2R,5Z)-2-carboxy-4-methylthiazol-5(2H)-ylidene]ethyl phosphate + 4-amino-2-methyl-5-(diphosphooxymethyl)pyrimidine + 2 H(+) = thiamine phosphate + CO2 + diphosphate. The catalysed reaction is 2-(2-carboxy-4-methylthiazol-5-yl)ethyl phosphate + 4-amino-2-methyl-5-(diphosphooxymethyl)pyrimidine + 2 H(+) = thiamine phosphate + CO2 + diphosphate. It carries out the reaction 4-methyl-5-(2-phosphooxyethyl)-thiazole + 4-amino-2-methyl-5-(diphosphooxymethyl)pyrimidine + H(+) = thiamine phosphate + diphosphate. Its pathway is cofactor biosynthesis; thiamine diphosphate biosynthesis; thiamine phosphate from 4-amino-2-methyl-5-diphosphomethylpyrimidine and 4-methyl-5-(2-phosphoethyl)-thiazole: step 1/1. Functionally, condenses 4-methyl-5-(beta-hydroxyethyl)thiazole monophosphate (THZ-P) and 2-methyl-4-amino-5-hydroxymethyl pyrimidine pyrophosphate (HMP-PP) to form thiamine monophosphate (TMP). This chain is Thiamine-phosphate synthase, found in Listeria welshimeri serovar 6b (strain ATCC 35897 / DSM 20650 / CCUG 15529 / CIP 8149 / NCTC 11857 / SLCC 5334 / V8).